The following is a 228-amino-acid chain: Ribonuclease 3 (228 aa).

An RNase III domain is found at 7-136 (LNKLKNEYNI…FNGALFLDQG (130 aa)). Glutamate 49 contacts Mg(2+). The active site involves aspartate 53. Mg(2+)-binding residues include aspartate 122 and glutamate 125. Glutamate 125 is an active-site residue. Positions 162–228 (DYKTDLQELL…AAKAALQKFE (67 aa)) constitute a DRBM domain. Residues 207–228 (GEGHNKKAAEQQAAKAALQKFE) form a disordered region. Low complexity predominate over residues 216–228 (EQQAAKAALQKFE).

Belongs to the ribonuclease III family. Homodimer. The cofactor is Mg(2+).

The protein localises to the cytoplasm. It carries out the reaction Endonucleolytic cleavage to 5'-phosphomonoester.. In terms of biological role, digests double-stranded RNA. Involved in the processing of primary rRNA transcript to yield the immediate precursors to the large and small rRNAs (23S and 16S). Processes some mRNAs, and tRNAs when they are encoded in the rRNA operon. Processes pre-crRNA and tracrRNA of type II CRISPR loci if present in the organism. The protein is Ribonuclease 3 of Lactobacillus acidophilus (strain ATCC 700396 / NCK56 / N2 / NCFM).